A 342-amino-acid chain; its full sequence is UDP-3-O-acylglucosamine N-acyltransferase (342 aa).

The active-site Proton acceptor is the His241.

This sequence belongs to the transferase hexapeptide repeat family. LpxD subfamily. Homotrimer.

It catalyses the reaction a UDP-3-O-[(3R)-3-hydroxyacyl]-alpha-D-glucosamine + a (3R)-hydroxyacyl-[ACP] = a UDP-2-N,3-O-bis[(3R)-3-hydroxyacyl]-alpha-D-glucosamine + holo-[ACP] + H(+). Its pathway is bacterial outer membrane biogenesis; LPS lipid A biosynthesis. Catalyzes the N-acylation of UDP-3-O-acylglucosamine using 3-hydroxyacyl-ACP as the acyl donor. Is involved in the biosynthesis of lipid A, a phosphorylated glycolipid that anchors the lipopolysaccharide to the outer membrane of the cell. This Pasteurella multocida (strain Pm70) protein is UDP-3-O-acylglucosamine N-acyltransferase.